Consider the following 158-residue polypeptide: MARMHARKRGKSGSKRPPRTAPPIWLEYTVEDIENLVVKLRKEGYSTAMIGTILRDQYGIPTVKLFRDPDNPNRKLTITRILEKHGLAPEIPEDLMFLIKRAVNLRKHLEQHPKDLHSMRGLQLIESKIRRLVKYYKRKGKLPKDWRYDPEQAKLLVR.

Positions 1–18 (MARMHARKRGKSGSKRPP) are enriched in basic residues. Residues 1-21 (MARMHARKRGKSGSKRPPRTA) form a disordered region.

It belongs to the universal ribosomal protein uS15 family. As to quaternary structure, part of the 30S ribosomal subunit.

The polypeptide is Small ribosomal subunit protein uS15 (Pyrococcus abyssi (strain GE5 / Orsay)).